Reading from the N-terminus, the 49-residue chain is MRVNITLEHKESGERLYLTSKNKRNTPDRLQLKKYSPKLRKHVVFTEVK.

It belongs to the bacterial ribosomal protein bL33 family.

The chain is Large ribosomal subunit protein bL33 from Streptococcus gordonii (strain Challis / ATCC 35105 / BCRC 15272 / CH1 / DL1 / V288).